The primary structure comprises 54 residues: ComX pheromone (54 aa).

A propeptide spanning residues 1–46 (MQEIVGYLVKNPEVLDEVMKGRASLLNIDKDQLKSIVDAFGGLQIY) is cleaved from the precursor. Tryptophan 51 carries 3'-geranyl-2',N2-cyclotryptophan lipidation.

Interacts directly with the sensor histidine kinase ComP and stimulates its activity. In terms of processing, trp-51 is modified by isoprenylation, probably by geranylation, which is essential for activity. Modified by the tryptophan prenyltransferase ComQ before export to the extracellular environment. The type of isoprenyl derivative differs among the different pherotypes and depends on ComX primary sequence.

It localises to the secreted. Part of a major quorum-sensing system that regulates the development of genetic competence. Acts through the activation of the two-component regulatory system ComP/ComA composed of a sensor histidine kinase, ComP, and a response regulator, ComA. This Bacillus mojavensis protein is ComX pheromone.